Here is a 255-residue protein sequence, read N- to C-terminus: Protein DAL82 (255 aa).

Residues 87–149 (PEHPRPRTKF…SQPLPLDSIT (63 aa)) form a disordered region. Residues 128–138 (PNNHSSDDEHS) show a composition bias toward basic and acidic residues.

Its function is as follows. Positive regulator of allophanate-induced genes in S.cerevisiae. The sequence is that of Protein DAL82 (DAL82) from Saccharomyces cerevisiae (strain ATCC 204508 / S288c) (Baker's yeast).